Here is a 208-residue protein sequence, read N- to C-terminus: Ubiquinone biosynthesis protein COQ4 homolog, mitochondrial (208 aa).

Residues histidine 105, aspartate 106, histidine 109, and glutamate 122 each contribute to the Zn(2+) site.

The protein belongs to the COQ4 family. As to quaternary structure, component of a multi-subunit COQ enzyme complex. The cofactor is Zn(2+).

Its subcellular location is the mitochondrion inner membrane. It catalyses the reaction a 4-hydroxy-3-methoxy-5-(all-trans-polyprenyl)benzoate + H(+) = a 2-methoxy-6-(all-trans-polyprenyl)phenol + CO2. It participates in cofactor biosynthesis; ubiquinone biosynthesis. Lyase that catalyzes the C1-decarboxylation of 4-hydroxy-3-methoxy-5-(all-trans-polyprenyl)benzoic acid into 2-methoxy-6-(all-trans-polyprenyl)phenol during ubiquinone biosynthesis. This is Ubiquinone biosynthesis protein COQ4 homolog, mitochondrial from Nematostella vectensis (Starlet sea anemone).